The chain runs to 192 residues: uncharacterized protein (192 aa).

Residues 29–160 form the Nudix hydrolase domain; that stretch reads HRQAAVLIPI…PLDIYRRGDS (132 aa). A Nudix box motif is present at residues 67–89; the sequence is GAVDDTDASVIAAALREAEEEVA. Residues glutamate 83 and glutamate 87 each contribute to the Mg(2+) site.

Belongs to the Nudix hydrolase family. PCD1 subfamily. The cofactor is Mn(2+). It depends on Mg(2+) as a cofactor.

Functionally, probably mediates the hydrolysis of some nucleoside diphosphate derivatives. This is an uncharacterized protein from Shigella flexneri serotype 5b (strain 8401).